The chain runs to 436 residues: Hydrogenobyrinate a,c-diamide synthase (436 aa).

Positions 244–435 constitute a GATase cobBQ-type domain; it reads RIAVARDDAF…MHVIDFSGEA (192 aa). Cys327 serves as the catalytic Nucleophile.

Belongs to the CobB/CbiA family. Mg(2+) serves as cofactor.

The enzyme catalyses hydrogenobyrinate + 2 L-glutamine + 2 ATP + 2 H2O = hydrogenobyrinate a,c-diamide + 2 L-glutamate + 2 ADP + 2 phosphate + 2 H(+). It participates in cofactor biosynthesis; adenosylcobalamin biosynthesis; cob(II)yrinate a,c-diamide from precorrin-2 (aerobic route): step 9/10. Its function is as follows. Catalyzes the ATP-dependent amidation of the two carboxylate groups at positions a and c of hydrogenobyrinate, using either L-glutamine or ammonia as the nitrogen source. This Brucella abortus biovar 1 (strain 9-941) protein is Hydrogenobyrinate a,c-diamide synthase.